The chain runs to 143 residues: Mannitol-specific phosphotransferase enzyme IIA component (143 aa).

Residues 2–142 (QVLAKENIKL…EDLIAIFNEV (141 aa)) enclose the PTS EIIA type-2 domain. His62 (tele-phosphohistidine intermediate) is an active-site residue. Position 62 is a phosphohistidine; by HPr (His62). Ser74 bears the Phosphoserine mark.

The protein localises to the cytoplasm. In terms of biological role, the phosphoenolpyruvate-dependent sugar phosphotransferase system (sugar PTS), a major carbohydrate active transport system, catalyzes the phosphorylation of incoming sugar substrates concomitantly with their translocation across the cell membrane. The enzyme II CmtAB PTS system is involved in D-mannitol transport. In Bacillus subtilis (strain 168), this protein is Mannitol-specific phosphotransferase enzyme IIA component (mtlF).